The sequence spans 37 residues: Cytochrome b6-f complex subunit 5 (37 aa).

Residues 5-25 (FLFGIVLGLIPITLAGLFVTA) form a helical membrane-spanning segment.

Belongs to the PetG family. As to quaternary structure, the 4 large subunits of the cytochrome b6-f complex are cytochrome b6, subunit IV (17 kDa polypeptide, PetD), cytochrome f and the Rieske protein, while the 4 small subunits are PetG, PetL, PetM and PetN. The complex functions as a dimer.

It is found in the plastid. It localises to the chloroplast thylakoid membrane. Component of the cytochrome b6-f complex, which mediates electron transfer between photosystem II (PSII) and photosystem I (PSI), cyclic electron flow around PSI, and state transitions. PetG is required for either the stability or assembly of the cytochrome b6-f complex. The polypeptide is Cytochrome b6-f complex subunit 5 (Capsella bursa-pastoris (Shepherd's purse)).